The primary structure comprises 89 residues: Small ribosomal subunit protein uS15 (89 aa).

It belongs to the universal ribosomal protein uS15 family. Part of the 30S ribosomal subunit. Forms a bridge to the 50S subunit in the 70S ribosome, contacting the 23S rRNA.

Its function is as follows. One of the primary rRNA binding proteins, it binds directly to 16S rRNA where it helps nucleate assembly of the platform of the 30S subunit by binding and bridging several RNA helices of the 16S rRNA. In terms of biological role, forms an intersubunit bridge (bridge B4) with the 23S rRNA of the 50S subunit in the ribosome. In Trichormus variabilis (strain ATCC 29413 / PCC 7937) (Anabaena variabilis), this protein is Small ribosomal subunit protein uS15.